Reading from the N-terminus, the 220-residue chain is Ribonuclease HII (220 aa).

The 189-residue stretch at 32–220 folds into the RNase H type-2 domain; that stretch reads KHIVGIDEAG…FAPIKGRYSV (189 aa). 3 residues coordinate a divalent metal cation: Asp38, Glu39, and Asp130.

It belongs to the RNase HII family. Requires Mn(2+) as cofactor. It depends on Mg(2+) as a cofactor.

It localises to the cytoplasm. It carries out the reaction Endonucleolytic cleavage to 5'-phosphomonoester.. Its function is as follows. Endonuclease that specifically degrades the RNA of RNA-DNA hybrids. This Brucella anthropi (strain ATCC 49188 / DSM 6882 / CCUG 24695 / JCM 21032 / LMG 3331 / NBRC 15819 / NCTC 12168 / Alc 37) (Ochrobactrum anthropi) protein is Ribonuclease HII.